Here is a 117-residue protein sequence, read N- to C-terminus: Holo-[acyl-carrier-protein] synthase (117 aa).

Mg(2+) is bound by residues Asp8 and Glu58.

The protein belongs to the P-Pant transferase superfamily. AcpS family. The cofactor is Mg(2+).

It localises to the cytoplasm. The enzyme catalyses apo-[ACP] + CoA = holo-[ACP] + adenosine 3',5'-bisphosphate + H(+). Its function is as follows. Transfers the 4'-phosphopantetheine moiety from coenzyme A to a Ser of acyl-carrier-protein. In Latilactobacillus sakei subsp. sakei (strain 23K) (Lactobacillus sakei subsp. sakei), this protein is Holo-[acyl-carrier-protein] synthase.